Consider the following 283-residue polypeptide: Bifunctional protein FolD (283 aa).

Residues 165 to 167, serine 190, and threonine 231 contribute to the NADP(+) site; that span reads GRS.

It belongs to the tetrahydrofolate dehydrogenase/cyclohydrolase family. Homodimer.

It catalyses the reaction (6R)-5,10-methylene-5,6,7,8-tetrahydrofolate + NADP(+) = (6R)-5,10-methenyltetrahydrofolate + NADPH. It carries out the reaction (6R)-5,10-methenyltetrahydrofolate + H2O = (6R)-10-formyltetrahydrofolate + H(+). It participates in one-carbon metabolism; tetrahydrofolate interconversion. Functionally, catalyzes the oxidation of 5,10-methylenetetrahydrofolate to 5,10-methenyltetrahydrofolate and then the hydrolysis of 5,10-methenyltetrahydrofolate to 10-formyltetrahydrofolate. The chain is Bifunctional protein FolD from Nocardia farcinica (strain IFM 10152).